The sequence spans 232 residues: Orotidine 5'-phosphate decarboxylase (232 aa).

Residues Asp13, Lys35, Asp62–Thr71, Thr121, Arg182, Gln191, Gly211, and Arg212 each bind substrate. The Proton donor role is filled by Lys64.

It belongs to the OMP decarboxylase family. Type 1 subfamily. As to quaternary structure, homodimer.

It carries out the reaction orotidine 5'-phosphate + H(+) = UMP + CO2. The protein operates within pyrimidine metabolism; UMP biosynthesis via de novo pathway; UMP from orotate: step 2/2. In terms of biological role, catalyzes the decarboxylation of orotidine 5'-monophosphate (OMP) to uridine 5'-monophosphate (UMP). The polypeptide is Orotidine 5'-phosphate decarboxylase (Teredinibacter turnerae (strain ATCC 39867 / T7901)).